A 400-amino-acid chain; its full sequence is N(alpha)-acyl-glutamine aminoacylase (400 aa).

It belongs to the peptidase M20 family. Zn(2+) is required as a cofactor.

It catalyses the reaction an N(2)-acyl-L-glutamine + H2O = a carboxylate + L-glutamine. The enzyme catalyses N(2)-[(2E)-3-methylhex-2-enoyl]-L-glutaminate + H2O = (2E)-3-methylhex-2-enoate + L-glutamine. The catalysed reaction is N(2)-(3-hydroxy-3-methylhexanoyl)-L-glutaminate + H2O = 3-hydroxy-3-methylhexanoate + L-glutamine. Partial loss of activity with the combination Mn(2+) and chelating agents. Activity is lost in presence of 0.5 mM dithiothreitol. Hydrolyzes odorless N-alpha-acyl-L-glutamine conjugates of short- and medium-chain fatty acids, releasing human axillary malodor compounds. The enzyme is highly specific for the glutamine residue but has a low specificity for the acyl part of the substrate. The two most common products are 3-methyl-2-hexenoic acid (3M2H) and 3-hydroxy-3-methyl-hexanoic acid (HMHA), which are produced from the odorless precursors N-alpha-3-methyl-2-hexenoyl-L-glutamine (3M2H-Gln) and N-alpha-3-hydroxy-3-methylhexanoyl-L-glutamine (HMHA-Gln). In addition, over 28 different carboxylic acids contributing to human body odor are released by this enzyme from odorless axilla secretions, including several aliphatic 3-hydroxy acids with 4-Me branches, 3,4-unsaturated, 4-Et-branched aliphatic acids, and a variety of degradation products of amino acids. This chain is N(alpha)-acyl-glutamine aminoacylase, found in Corynebacterium striatum.